The chain runs to 519 residues: Probable U3 small nucleolar RNA-associated protein 18 (519 aa).

WD repeat units lie at residues 26–66 (DKEN…MFDT), 71–111 (GAKD…RLMI), 216–254 (SHSG…NPLV), 259–298 (LRSS…VQKV), 306–345 (NFQP…FATS), 347–386 (KIEG…VVRR), 390–429 (QDGV…ADAA), 438–479 (NITF…VFRN), and 485–519 (TPLG…AHYD).

It belongs to the WD repeat UTP18 family. Component of the ribosomal small subunit (SSU) processome.

Its subcellular location is the nucleus. The protein resides in the nucleolus. Its function is as follows. Involved in nucleolar processing of pre-18S ribosomal RNA. This is Probable U3 small nucleolar RNA-associated protein 18 from Schizosaccharomyces pombe (strain 972 / ATCC 24843) (Fission yeast).